The primary structure comprises 182 residues: MNRCNIRLRLAGMTTWVASIALLAAALSGCGAGQISQTANQKPAVNGNRLTINNVLLRDIRIQAVQTSDFIQPGKAVDLVLVAVNQSPDVSDRLVGITSDIGSVTVAGDARLPASGMLFVGTPDGQIVAPGPLPSNQAAKATVNLTKPIANGLTYNFTFKFEKAGQGSVMVPISAGLATPHE.

The first 29 residues, 1 to 29 (MNRCNIRLRLAGMTTWVASIALLAAALSG), serve as a signal peptide directing secretion. Residue Cys30 is the site of N-palmitoyl cysteine attachment. Residue Cys30 is the site of S-diacylglycerol cysteine attachment.

Its subcellular location is the cell membrane. The protein is Putative lipoprotein LpqE (lpqE) of Mycobacterium bovis (strain ATCC BAA-935 / AF2122/97).